Reading from the N-terminus, the 324-residue chain is Adenine deaminase (324 aa).

Positions 11, 13, and 189 each coordinate Zn(2+). Glu192 acts as the Proton donor in catalysis. A Zn(2+)-binding site is contributed by Asp270. Asp271 lines the substrate pocket.

This sequence belongs to the metallo-dependent hydrolases superfamily. Adenosine and AMP deaminases family. Adenine deaminase type 2 subfamily. The cofactor is Zn(2+).

It carries out the reaction adenine + H2O + H(+) = hypoxanthine + NH4(+). Its function is as follows. Catalyzes the hydrolytic deamination of adenine to hypoxanthine. Plays an important role in the purine salvage pathway and in nitrogen catabolism. This chain is Adenine deaminase, found in Rhizobium meliloti (strain 1021) (Ensifer meliloti).